The chain runs to 382 residues: Succinyl-diaminopimelate desuccinylase (382 aa).

Histidine 71 provides a ligand contact to Zn(2+). The active site involves aspartate 73. Residue aspartate 105 coordinates Zn(2+). Glutamate 139 acts as the Proton acceptor in catalysis. Residues glutamate 140, glutamate 168, and histidine 354 each contribute to the Zn(2+) site.

Belongs to the peptidase M20A family. DapE subfamily. In terms of assembly, homodimer. Requires Zn(2+) as cofactor. The cofactor is Co(2+).

It catalyses the reaction N-succinyl-(2S,6S)-2,6-diaminopimelate + H2O = (2S,6S)-2,6-diaminopimelate + succinate. The protein operates within amino-acid biosynthesis; L-lysine biosynthesis via DAP pathway; LL-2,6-diaminopimelate from (S)-tetrahydrodipicolinate (succinylase route): step 3/3. Its function is as follows. Catalyzes the hydrolysis of N-succinyl-L,L-diaminopimelic acid (SDAP), forming succinate and LL-2,6-diaminopimelate (DAP), an intermediate involved in the bacterial biosynthesis of lysine and meso-diaminopimelic acid, an essential component of bacterial cell walls. The chain is Succinyl-diaminopimelate desuccinylase from Stutzerimonas stutzeri (strain A1501) (Pseudomonas stutzeri).